The chain runs to 419 residues: L-rhamnose isomerase (419 aa).

Positions 262, 294, and 296 each coordinate Mn(2+).

Belongs to the rhamnose isomerase family. Homotetramer. Mn(2+) is required as a cofactor.

Its subcellular location is the cytoplasm. It carries out the reaction L-rhamnopyranose = L-rhamnulose. It participates in carbohydrate degradation; L-rhamnose degradation; glycerone phosphate from L-rhamnose: step 1/3. Functionally, catalyzes the interconversion of L-rhamnose and L-rhamnulose. This Shigella sonnei (strain Ss046) protein is L-rhamnose isomerase.